The following is a 183-amino-acid chain: Peptidyl-tRNA hydrolase (183 aa).

Tyrosine 15 contacts tRNA. The Proton acceptor role is filled by histidine 20. Tyrosine 67 and asparagine 69 together coordinate tRNA.

It belongs to the PTH family. In terms of assembly, monomer.

Its subcellular location is the cytoplasm. It catalyses the reaction an N-acyl-L-alpha-aminoacyl-tRNA + H2O = an N-acyl-L-amino acid + a tRNA + H(+). Its function is as follows. Hydrolyzes ribosome-free peptidyl-tRNAs (with 1 or more amino acids incorporated), which drop off the ribosome during protein synthesis, or as a result of ribosome stalling. In terms of biological role, catalyzes the release of premature peptidyl moieties from peptidyl-tRNA molecules trapped in stalled 50S ribosomal subunits, and thus maintains levels of free tRNAs and 50S ribosomes. This is Peptidyl-tRNA hydrolase from Chlamydia abortus (strain DSM 27085 / S26/3) (Chlamydophila abortus).